A 147-amino-acid polypeptide reads, in one-letter code: Hemoglobin subunit gamma-2 (147 aa).

The Globin domain occupies 3–147; sequence HFTEEDKATI…VASALSSRYH (145 aa). Thr-13 carries the post-translational modification Phosphothreonine. A phosphoserine mark is found at Ser-45, Ser-51, and Ser-53. N6-acetyllysine is present on Lys-60. His-64 is a heme b binding site. An N6-acetyllysine modification is found at Lys-83. A heme b-binding site is contributed by His-93. Cys-94 carries the post-translational modification S-nitrosocysteine. Residues Ser-140, Ser-143, and Ser-144 each carry the phosphoserine modification.

This sequence belongs to the globin family. As to quaternary structure, heterotetramer of two alpha chains and two gamma chains in fetal hemoglobin (Hb F). Red blood cells.

Its function is as follows. Gamma chains make up the fetal hemoglobin F, in combination with alpha chains. This chain is Hemoglobin subunit gamma-2 (HBG2), found in Gorilla gorilla gorilla (Western lowland gorilla).